The chain runs to 198 residues: Ribosomal RNA small subunit methyltransferase G (198 aa).

S-adenosyl-L-methionine is bound by residues Gly-74, Phe-79, Ile-123–Gln-124, and Arg-136.

It belongs to the methyltransferase superfamily. RNA methyltransferase RsmG family.

The protein resides in the cytoplasm. The enzyme catalyses guanosine(527) in 16S rRNA + S-adenosyl-L-methionine = N(7)-methylguanosine(527) in 16S rRNA + S-adenosyl-L-homocysteine. In terms of biological role, specifically methylates the N7 position of guanine in position 527 of 16S rRNA. The protein is Ribosomal RNA small subunit methyltransferase G of Orientia tsutsugamushi (strain Ikeda) (Rickettsia tsutsugamushi).